We begin with the raw amino-acid sequence, 206 residues long: Repetitive proline-rich cell wall protein 1 (206 aa).

A signal peptide spans 1–22 (MASSNFLVLLLFALFAIPQGLA). A run of 33 repeats spans residues 32-36 (PPVYK), 37-41 (PPVEK), 42-46 (PPVYK), 47-51 (PPVEK), 52-56 (PPVYK), 57-61 (PPVEK), 62-66 (PPVYK), 67-71 (PPVYK), 72-76 (PPVYK), 77-81 (PPVVK), 82-86 (PPVYK), 87-91 (PPVYK), 92-96 (PPVYK), 97-101 (PPVYK), 102-106 (PPVEK), 107-111 (PPVYK), 112-116 (PPVYK), 117-121 (PPVVK), 122-126 (PPVYK), 127-131 (PPVYK), 132-136 (PPVEK), 137-141 (PPVYK), 142-146 (PPVVK), 147-151 (PPVYK), 152-156 (PPVYK), 157-161 (PPVVK), 162-166 (PPVYK), 167-171 (PPVYK), 172-176 (PPVYK), 177-181 (PPVEK), 182-186 (PPVYK), 187-191 (PPVYK), and 192-196 (PPVEK). Residues 32-201 (PPVYKPPVEK…PPVEKPPVYG (170 aa)) form a 34 X 5 AA approximate tandem repeats of P-P-V-[EVY]-K region. The segment at 51 to 84 (KPPVYKPPVEKPPVYKPPVYKPPVYKPPVVKPPV) is disordered. The interval 132–206 (PPVEKPPVYK…PPVYGPPHHP (75 aa)) is disordered. The stretch at 197-201 (PPVYG) is one 34; approximate repeat.

The protein belongs to the plant proline-rich protein superfamily. ENOD12 family. In terms of tissue distribution, expressed in hypocotyls, roots and mature root nodules.

Its subcellular location is the secreted. It localises to the cell wall. Functionally, this is a developmentally regulated putative cell wall protein. This is Repetitive proline-rich cell wall protein 1 (PRP1) from Medicago truncatula (Barrel medic).